A 694-amino-acid chain; its full sequence is Elongation factor G 1 (694 aa).

The tr-type G domain maps to 5–280 (SRYRNIGIFA…AVVDYLPDPT (276 aa)). GTP is bound by residues 14–21 (AHVDAGKT), 78–82 (DTPGH), and 132–135 (NKLD).

It belongs to the TRAFAC class translation factor GTPase superfamily. Classic translation factor GTPase family. EF-G/EF-2 subfamily.

Its subcellular location is the cytoplasm. Functionally, catalyzes the GTP-dependent ribosomal translocation step during translation elongation. During this step, the ribosome changes from the pre-translocational (PRE) to the post-translocational (POST) state as the newly formed A-site-bound peptidyl-tRNA and P-site-bound deacylated tRNA move to the P and E sites, respectively. Catalyzes the coordinated movement of the two tRNA molecules, the mRNA and conformational changes in the ribosome. The polypeptide is Elongation factor G 1 (Methylococcus capsulatus (strain ATCC 33009 / NCIMB 11132 / Bath)).